The chain runs to 472 residues: Alanine--anticapsin ligase (472 aa).

Glu-109 contacts Mg(2+). ATP-binding residues include Lys-138 and Lys-178. The 214-residue stretch at Arg-142–Cys-355 folds into the ATP-grasp domain. A Mg(2+)-binding site is contributed by Leu-182. ATP is bound by residues Ser-184–Ser-185, Glu-226–Leu-229, and Gln-268. Substrate-binding positions include Glu-273 and His-309–Glu-311. Mg(2+) is bound by residues Glu-311 and Glu-324. Arg-328–Gly-331 is a binding site for substrate.

As to quaternary structure, monomer or homodimer. The cofactor is Mg(2+).

It catalyses the reaction L-anticapsin + L-alanine + ATP = bacilysin + ADP + phosphate + H(+). It participates in antibiotic biosynthesis; bacilysin biosynthesis. Part of the bacABCDEFG operon responsible for the biosynthesis of bacilysin, an irreversible inactivator of the glutaminase domain of glucosamine synthetase. Catalyzes the formation of alpha-dipeptides from various L-amino acids in the presence of ATP. In vivo catalyzes the ligation of L-alanine and L-anticapsin (epoxycyclohexanonyl-Ala) to produce the final bacilysin antibiotic (L-Ala-L-4S-cyclohexenonyl-Ala dipeptide). This is Alanine--anticapsin ligase from Bacillus amyloliquefaciens (Bacillus velezensis).